The sequence spans 336 residues: CASP-like protein UU1 (336 aa).

Over 1–170 (MGKGPGLDPS…PAMESNKDDN (170 aa)) the chain is Cytoplasmic. The helical transmembrane segment at 171 to 191 (FFGAIVLSLRAAQIVFTVVGL) threads the bilayer. Residues 192 to 222 (GVMGSLKHTSHGDYYYYYYDFSFTQVDSYIG) are Extracellular-facing. The helical transmembrane segment at 223–243 (VLSLDVIVCLYAIVQLVLCFI) threads the bilayer. The Cytoplasmic portion of the chain corresponds to 244 to 261 (QRSNQGKYLSSPTTVAAK). A helical transmembrane segment spans residues 262–282 (LTFVFDQVLAYALVATAGAAA). Over 283–307 (GSALEIRKGTSCSGTWTVICSKGEA) the chain is Extracellular. Residues 308 to 328 (SVAMSFFAFAFLAATAAVYSV) form a helical membrane-spanning segment. The Cytoplasmic portion of the chain corresponds to 329–336 (RLLRITGR).

This sequence belongs to the Casparian strip membrane proteins (CASP) family. Homodimer and heterodimers.

The protein resides in the cell membrane. The protein is CASP-like protein UU1 of Physcomitrium patens (Spreading-leaved earth moss).